We begin with the raw amino-acid sequence, 97 residues long: Large ribosomal subunit protein eL21 (97 aa).

Belongs to the eukaryotic ribosomal protein eL21 family.

In Methanosarcina mazei (strain ATCC BAA-159 / DSM 3647 / Goe1 / Go1 / JCM 11833 / OCM 88) (Methanosarcina frisia), this protein is Large ribosomal subunit protein eL21.